The chain runs to 294 residues: MNILIPATSANLGPGFDALGLSLKLFNSVKIEPSKFSSVSINGEGSDSTNLKRNNIFLSIFNEIFLELTGKNENFRIVFENNIPFSRGLGSSSAVIVGAIASAYEMAGFKASKSVVLNKAIIYETHPDNISPAVHGGFISAVVKNGNVYANKINLSDDIKAVVVIPNKPMSTASSRQILPKNYTMKECVNNLSHAAFLTSCFYEKRYDLLRVASEDMMHEERRMSALKELFEVRKVAYENGALMSTLSGSGSSFLNIAYKDDAKNLQDALKSKFGDFRVEIFSFDNDGYEITQS.

84–94 is a binding site for ATP; the sequence is PFSRGLGSSSA.

Belongs to the GHMP kinase family. Homoserine kinase subfamily.

The protein localises to the cytoplasm. The enzyme catalyses L-homoserine + ATP = O-phospho-L-homoserine + ADP + H(+). It functions in the pathway amino-acid biosynthesis; L-threonine biosynthesis; L-threonine from L-aspartate: step 4/5. Functionally, catalyzes the ATP-dependent phosphorylation of L-homoserine to L-homoserine phosphate. The chain is Homoserine kinase from Campylobacter concisus (strain 13826).